The following is a 704-amino-acid chain: MLKLFSAFRKDKIWDFDGGIHPPEMKTQSNGTPLRQVPLAPRFVIPLKQHIGAEGELCVSVGDRVLRGQALTRGRGRMLPVHAPTSGTVIAIAPHSTAHPSALAELSVIIDADGEDRWIEREGWSDYRAHSREALIERIHQYGVAGLGGAGFPTGVKLQGGGDKITTLIINAAECEPYITADDRLMQDCAAQIVEGIRILAHILQPREVLIGIEDNKPQAISMLRAVLADAHDISLRVIPTKYPSGGAKQLTQILTEKQVPHGGRSSDIGVLMQNVGTAYAVKRAVVDGEPITERVVTLTGEAVSRPGNVWARLGTPVRHLLNDAGFCPSADQMVIMGGPLMGFTLPWLDVPVVKITNCLLAPSVAEMGAPQEEKSCIRCSACADACPADLLPQQLYWFSKGQQHDKATAHHIADCIECGACAWVCPSNIPLVQYFRQEKAEINAIRLEEKRAAEAKARFEARQARLEREKAARLARHKSAAVQPAAKDQDAIAAALARVKEKQAQATQPVVIQAGSQPDNSAVIAAREARKAQARAKQAAHPMADSAIPGDDPSKAAVEAAIARAKARKQEQQAGSEPAEPVDPRKAAVEAAIARAKARKQEQQAGSEPVEAVDPRKAAVEAAIARAKARKQEQQTGSEPAEPIDPRKAAVEAAIARAKARKQEQQAGSEPAEPADPRKAAVAAAIARVQAKKAAQQQVVNED.

2 4Fe-4S ferredoxin-type domains span residues 368–397 and 407–436; these read MGAP…QQLY and KATA…VQYF. Cys-377, Cys-380, Cys-383, Cys-387, Cys-416, Cys-419, Cys-422, and Cys-426 together coordinate [4Fe-4S] cluster. The disordered stretch occupies residues 536–684; that stretch reads RAKQAAHPMA…PADPRKAAVA (149 aa). Residues 556–565 are compositionally biased toward low complexity; sequence KAAVEAAIAR.

This sequence belongs to the 4Fe4S bacterial-type ferredoxin family. RnfC subfamily. The complex is composed of six subunits: RsxA, RsxB, RsxC, RsxD, RsxE and RsxG. Requires [4Fe-4S] cluster as cofactor.

It is found in the cell inner membrane. Functionally, part of a membrane-bound complex that couples electron transfer with translocation of ions across the membrane. Required to maintain the reduced state of SoxR. The protein is Ion-translocating oxidoreductase complex subunit C of Salmonella choleraesuis (strain SC-B67).